A 197-amino-acid polypeptide reads, in one-letter code: Holliday junction branch migration complex subunit RuvA (197 aa).

Residues 1-64 (MIASVRGVVQ…EDMLALFGFS (64 aa)) form a domain I region. The segment at 65 to 143 (SPAQRALFEL…VATISPQLST (79 aa)) is domain II. The interval 144–153 (NPGLLALNTE) is flexible linker. The domain III stretch occupies residues 153–197 (ELIDILTSLGYSTTEAQAALNALPADAPADTEERLRLALQYFGGV).

Belongs to the RuvA family. In terms of assembly, homotetramer. Forms an RuvA(8)-RuvB(12)-Holliday junction (HJ) complex. HJ DNA is sandwiched between 2 RuvA tetramers; dsDNA enters through RuvA and exits via RuvB. An RuvB hexamer assembles on each DNA strand where it exits the tetramer. Each RuvB hexamer is contacted by two RuvA subunits (via domain III) on 2 adjacent RuvB subunits; this complex drives branch migration. In the full resolvosome a probable DNA-RuvA(4)-RuvB(12)-RuvC(2) complex forms which resolves the HJ.

Its subcellular location is the cytoplasm. Functionally, the RuvA-RuvB-RuvC complex processes Holliday junction (HJ) DNA during genetic recombination and DNA repair, while the RuvA-RuvB complex plays an important role in the rescue of blocked DNA replication forks via replication fork reversal (RFR). RuvA specifically binds to HJ cruciform DNA, conferring on it an open structure. The RuvB hexamer acts as an ATP-dependent pump, pulling dsDNA into and through the RuvAB complex. HJ branch migration allows RuvC to scan DNA until it finds its consensus sequence, where it cleaves and resolves the cruciform DNA. The sequence is that of Holliday junction branch migration complex subunit RuvA from Herpetosiphon aurantiacus (strain ATCC 23779 / DSM 785 / 114-95).